The following is an 838-amino-acid chain: Probable beta-glucosidase I (838 aa).

2 N-linked (GlcNAc...) asparagine glycosylation sites follow: asparagine 57 and asparagine 197. Residue aspartate 225 is part of the active site. Residues 395 to 555 (EGEKGFKFRV…GQEELISKAA (161 aa)) form the PA14 domain. A glycan (N-linked (GlcNAc...) asparagine) is linked at asparagine 493.

It belongs to the glycosyl hydrolase 3 family.

Its subcellular location is the secreted. It carries out the reaction Hydrolysis of terminal, non-reducing beta-D-glucosyl residues with release of beta-D-glucose.. It functions in the pathway glycan metabolism; cellulose degradation. Its function is as follows. Beta-glucosidases are one of a number of cellulolytic enzymes involved in the degradation of cellulosic biomass. Catalyzes the last step releasing glucose from the inhibitory cellobiose. The protein is Probable beta-glucosidase I (bglI) of Aspergillus clavatus (strain ATCC 1007 / CBS 513.65 / DSM 816 / NCTC 3887 / NRRL 1 / QM 1276 / 107).